The sequence spans 367 residues: Membrane-bound lytic murein transglycosylase C (367 aa).

The first 19 residues, 1-19 (MRKYAKYLPFCLVVPFLAA), serve as a signal peptide directing secretion. A lipid anchor (N-palmitoyl cysteine) is attached at Cys20. Residue Cys20 is the site of S-diacylglycerol cysteine attachment.

The protein belongs to the transglycosylase Slt family.

It localises to the cell outer membrane. The enzyme catalyses Exolytic cleavage of the (1-&gt;4)-beta-glycosidic linkage between N-acetylmuramic acid (MurNAc) and N-acetylglucosamine (GlcNAc) residues in peptidoglycan, from either the reducing or the non-reducing ends of the peptidoglycan chains, with concomitant formation of a 1,6-anhydrobond in the MurNAc residue.. Its function is as follows. Murein-degrading enzyme. May play a role in recycling of muropeptides during cell elongation and/or cell division. This is Membrane-bound lytic murein transglycosylase C from Haemophilus ducreyi (strain 35000HP / ATCC 700724).